We begin with the raw amino-acid sequence, 165 residues long: Large ribosomal subunit protein uL10 (165 aa).

It belongs to the universal ribosomal protein uL10 family. Part of the ribosomal stalk of the 50S ribosomal subunit. The N-terminus interacts with L11 and the large rRNA to form the base of the stalk. The C-terminus forms an elongated spine to which L12 dimers bind in a sequential fashion forming a multimeric L10(L12)X complex.

Functionally, forms part of the ribosomal stalk, playing a central role in the interaction of the ribosome with GTP-bound translation factors. The protein is Large ribosomal subunit protein uL10 of Deinococcus deserti (strain DSM 17065 / CIP 109153 / LMG 22923 / VCD115).